Here is a 1319-residue protein sequence, read N- to C-terminus: DNA-directed RNA polymerase subunit beta' (1319 aa).

Residues Cys-60, Cys-62, Cys-75, and Cys-78 each coordinate Zn(2+). Mg(2+)-binding residues include Asp-535, Asp-537, and Asp-539. Residues Cys-890, Cys-971, Cys-978, and Cys-981 each contribute to the Zn(2+) site.

Belongs to the RNA polymerase beta' chain family. The RNAP catalytic core consists of 2 alpha, 1 beta, 1 beta' and 1 omega subunit. When a sigma factor is associated with the core the holoenzyme is formed, which can initiate transcription. The cofactor is Mg(2+). Zn(2+) serves as cofactor.

The catalysed reaction is RNA(n) + a ribonucleoside 5'-triphosphate = RNA(n+1) + diphosphate. DNA-dependent RNA polymerase catalyzes the transcription of DNA into RNA using the four ribonucleoside triphosphates as substrates. The protein is DNA-directed RNA polymerase subunit beta' of Mycobacteroides abscessus (strain ATCC 19977 / DSM 44196 / CCUG 20993 / CIP 104536 / JCM 13569 / NCTC 13031 / TMC 1543 / L948) (Mycobacterium abscessus).